The sequence spans 151 residues: Deoxyuridine 5'-triphosphate nucleotidohydrolase (151 aa).

Substrate contacts are provided by residues 70-72, asparagine 83, 87-89, and methionine 97; these read RSG and LID.

The protein belongs to the dUTPase family. Mg(2+) is required as a cofactor.

It carries out the reaction dUTP + H2O = dUMP + diphosphate + H(+). The protein operates within pyrimidine metabolism; dUMP biosynthesis; dUMP from dCTP (dUTP route): step 2/2. Its function is as follows. This enzyme is involved in nucleotide metabolism: it produces dUMP, the immediate precursor of thymidine nucleotides and it decreases the intracellular concentration of dUTP so that uracil cannot be incorporated into DNA. This Pseudomonas syringae pv. syringae (strain B728a) protein is Deoxyuridine 5'-triphosphate nucleotidohydrolase.